A 322-amino-acid polypeptide reads, in one-letter code: Basic 30 kDa endochitinase (322 aa).

An N-terminal signal peptide occupies residues 1–22 (MRLSEFTTLFLLFSVLLLSASA). A Chitin-binding type-1 domain is found at 23–64 (EQCGSQAGGALCASGLCCSKFGWCGNTNEYCGPGNCQSQCPG). Disulfide bonds link cysteine 25–cysteine 40, cysteine 34–cysteine 46, cysteine 39–cysteine 53, and cysteine 58–cysteine 62. 4-hydroxyproline is present on residues proline 66 and proline 68. 3 disulfide bridges follow: cysteine 93/cysteine 156, cysteine 168/cysteine 176, and cysteine 275/cysteine 307. Glutamate 138 acts as the Proton donor in catalysis. Residues 316-322 (GLLVDIM) constitute a propeptide, removed in mature form.

This sequence belongs to the glycosyl hydrolase 19 family. Chitinase class I subfamily. The 4-hydroxyproline residues are not glycosylated in this plant vacuolar protein.

The protein resides in the vacuole. It is found in the secreted. It localises to the cell wall. The catalysed reaction is Random endo-hydrolysis of N-acetyl-beta-D-glucosaminide (1-&gt;4)-beta-linkages in chitin and chitodextrins.. Its function is as follows. Defense against chitin-containing fungal pathogens. The protein is Basic 30 kDa endochitinase (CHI9) of Solanum lycopersicum (Tomato).